Here is a 690-residue protein sequence, read N- to C-terminus: MPRVHAIEDYRNFGIMAHIDAGKTTTTERILYYTGKSHRIGEVHEGAATMDWMEQEQERGITITSAATTAFWNGKRLNIIDTPGHVDFTIEVERSLRVLDGAVCVLDSNQGVEPQTETVWRQGDKYKVPRIVFANKMDKTGADFFKCLQDIIDRLGAKPVAIQLPIGSESNFKGLIDLVRMKAVVWTDESLGAKFEDAEIPEDLLEQAKEYREKMIEAAVELDDDAMAAYLDGNEPEEATLKRLIRKAVLTGAFYPVLCGSAFKNKGVQPLLDAVVDYLPSPVDVPAIKGIDDDGNEVVRQADDKEPLALLAFKIMDDPFVGTITFCRIYSGVLQSGTGVVNSTREKKERIGRMLLMHANNREDIKEAYAGDIVALAGLKEARTGDTLCDPAKPVILEKMEFPEPVIEIAIEPKSKADQEKLGVALAKLAAEDPSFRVSTDIESGQTILKGMGELHLDIKVDILRRTYKVDANIGAPQVAFRERITKRAEVDYTHKKQTGGTGQFAAVKFIVEPNEPGKGYEFESKIVGGAVPKEYIPGVEKGIESVLSSGVVAGFPVVDVKVSLIDGKYHDVDSSALAFEIASRAAFREALQKGKSVLLEPIMKVEVVTPEDYTGSVIGDLNSRRGQIQGQDMRGNANVINAMVPLMNMFGYVNNLRSMSQGRATFTMQFDHYAEAPANVSAEVQKKFA.

The 276-residue stretch at 8–283 folds into the tr-type G domain; the sequence is EDYRNFGIMA…AVVDYLPSPV (276 aa). GTP-binding positions include 17-24, 81-85, and 135-138; these read AHIDAGKT, DTPGH, and NKMD.

Belongs to the TRAFAC class translation factor GTPase superfamily. Classic translation factor GTPase family. EF-G/EF-2 subfamily.

It localises to the cytoplasm. Catalyzes the GTP-dependent ribosomal translocation step during translation elongation. During this step, the ribosome changes from the pre-translocational (PRE) to the post-translocational (POST) state as the newly formed A-site-bound peptidyl-tRNA and P-site-bound deacylated tRNA move to the P and E sites, respectively. Catalyzes the coordinated movement of the two tRNA molecules, the mRNA and conformational changes in the ribosome. The polypeptide is Elongation factor G (Rhodopseudomonas palustris (strain BisB5)).